We begin with the raw amino-acid sequence, 405 residues long: Probable tRNA sulfurtransferase (405 aa).

Residues 60-165 (TAVMDRLKGV…LNGVFLSGQT (106 aa)) enclose the THUMP domain. ATP is bound by residues 183–184 (ML), 208–209 (HF), arginine 265, glycine 287, and glutamine 296.

This sequence belongs to the ThiI family.

The protein localises to the cytoplasm. The enzyme catalyses [ThiI sulfur-carrier protein]-S-sulfanyl-L-cysteine + a uridine in tRNA + 2 reduced [2Fe-2S]-[ferredoxin] + ATP + H(+) = [ThiI sulfur-carrier protein]-L-cysteine + a 4-thiouridine in tRNA + 2 oxidized [2Fe-2S]-[ferredoxin] + AMP + diphosphate. It carries out the reaction [ThiS sulfur-carrier protein]-C-terminal Gly-Gly-AMP + S-sulfanyl-L-cysteinyl-[cysteine desulfurase] + AH2 = [ThiS sulfur-carrier protein]-C-terminal-Gly-aminoethanethioate + L-cysteinyl-[cysteine desulfurase] + A + AMP + 2 H(+). It functions in the pathway cofactor biosynthesis; thiamine diphosphate biosynthesis. Its function is as follows. Catalyzes the ATP-dependent transfer of a sulfur to tRNA to produce 4-thiouridine in position 8 of tRNAs, which functions as a near-UV photosensor. Also catalyzes the transfer of sulfur to the sulfur carrier protein ThiS, forming ThiS-thiocarboxylate. This is a step in the synthesis of thiazole, in the thiamine biosynthesis pathway. The sulfur is donated as persulfide by IscS. This is Probable tRNA sulfurtransferase from Levilactobacillus brevis (strain ATCC 367 / BCRC 12310 / CIP 105137 / JCM 1170 / LMG 11437 / NCIMB 947 / NCTC 947) (Lactobacillus brevis).